The sequence spans 178 residues: Large ribosomal subunit protein bL25 (178 aa).

The protein belongs to the bacterial ribosomal protein bL25 family. CTC subfamily. In terms of assembly, part of the 50S ribosomal subunit; part of the 5S rRNA/L5/L18/L25 subcomplex. Contacts the 5S rRNA. Binds to the 5S rRNA independently of L5 and L18.

Functionally, this is one of the proteins that binds to the 5S RNA in the ribosome where it forms part of the central protuberance. This Helicobacter pylori (strain HPAG1) protein is Large ribosomal subunit protein bL25.